Here is a 2442-residue protein sequence, read N- to C-terminus: Piezo-type mechanosensitive ion channel component 1 (2442 aa).

The Extracellular portion of the chain corresponds to 1–5; it reads MTVPP. A helical membrane pass occupies residues 6 to 26; sequence LLKSCVVKLLLPAALLAAAII. Residue Arg27 is a topological domain, cytoplasmic. The helical transmembrane segment at 28–48 threads the bilayer; that stretch reads PSFLSIGYVLLALVSAVLPPI. The Extracellular segment spans residues 49–56; sequence RKSLALPK. The chain crosses the membrane as a helical span at residues 57–77; that stretch reads LVGTFVIITFLFCLAVALGVG. Residues 78–122 lie on the Cytoplasmic side of the membrane; that stretch reads SYQISEQVVHKNDRTYICNRSDTTLFRSIGLVRFHPTGTFESTRA. A helical transmembrane segment spans residues 123-143; the sequence is FLPEIIATSAALLTIIIVMFL. Residues 144–173 lie on the Extracellular side of the membrane; sequence SHRDEQLDVVGDVVTVRSESGREQRRQRKL. The helical transmembrane segment at 174-196 threads the bilayer; sequence AAIMWSAIGNSLRRLTNFVLFLF. Topologically, residues 197–198 are cytoplasmic; that stretch reads TA. A helical transmembrane segment spans residues 199–219; it reads YVGIVKPSLSNSIYFLAFLFI. The Extracellular segment spans residues 220-239; sequence STWWSTYTPLRHGVYNQIKK. The helical transmembrane segment at 240-260 threads the bilayer; the sequence is FLIFYSALHFLVLYTYQIPIV. Topologically, residues 261–303 are cytoplasmic; it reads HHSWLPTGSFLPRLFGLTVLMDSSCPEWWKFPFVAPDFNDDDL. The chain crosses the membrane as a helical span at residues 304-324; sequence IMKWPLYANPIVVLVFFYLTV. Over 325–454 the chain is Extracellular; sequence AQYKFTRNGS…GDKESAASKG (130 aa). N-linked (GlcNAc...) asparagine glycans are attached at residues Asn332, Asn392, and Asn440. The interval 389–417 is disordered; sequence LLSNASSSANDDEQGRARSRSPLRNGEEQ. A helical transmembrane segment spans residues 455–475; sequence MIAVMTFVIFHSYSIALTAMM. Residues 476 to 478 lie on the Cytoplasmic side of the membrane; sequence TWA. Residues 479 to 499 traverse the membrane as a helical segment; sequence LLYHSIFGLILLILTCILWIF. The Extracellular portion of the chain corresponds to 500-506; it reads RDTRKSS. A helical membrane pass occupies residues 507–527; the sequence is FAMAPIILMYIEFLLILQYFL. The Cytoplasmic portion of the chain corresponds to 528 to 552; it reads SMDIHAEIGDPAWMNFVGIEWTTLP. Residues 553–573 traverse the membrane as a helical segment; it reads VHAVIILCVQTLLTLPVFLLL. The Extracellular segment spans residues 574–633; it reads RLARREKFYESLSDYERQRRINSYGTFGASKTGAGGVAVAKFQDPKSRKFAAFVEYLSNK. A helical membrane pass occupies residues 634–654; sequence VSVYFIFVVSVVLLVVSTCFA. The Cytoplasmic portion of the chain corresponds to 655–656; the sequence is PN. A helical transmembrane segment spans residues 657–677; sequence FYNILFFALWALNLIYLKFSF. Topologically, residues 678-683 are extracellular; sequence RLYRGL. The helical transmembrane segment at 684–704 threads the bilayer; that stretch reads AYAFWLTLTFYTSIVIIALYI. The Cytoplasmic segment spans residues 705-739; the sequence is YQFPGVSQWIIRNTSLSQEWLNAIGLVDFRAIGES. A helical membrane pass occupies residues 740-760; sequence GALFLQLLAPIALFVVTMLQL. At 761-832 the chain is on the extracellular side; the sequence is KFFHGPWSRA…WRFFEVHISK (72 aa). Positions 768-798 are disordered; that stretch reads SRATSPRRAENDPPTSTTEAAAVASTSGTQG. Residues 782–794 are compositionally biased toward low complexity; that stretch reads TSTTEAAAVASTS. A glycan (N-linked (GlcNAc...) asparagine) is linked at Asn816. The chain crosses the membrane as a helical span at residues 833-853; that stretch reads IVFVIIAIFIANNINALYIPL. Residues 854–874 lie on the Cytoplasmic side of the membrane; that stretch reads VILLSLAICLPSAADGIFSLF. Residues 875–895 form a helical membrane-spanning segment; the sequence is MCAYLFLVALSKMIYQLDIVP. Over 896–931 the chain is Extracellular; sequence ELSQIDRGVGADNCSHGNISMPEWFGLKKEVEGTEP. Residues Asn908 and Asn913 are each glycosylated (N-linked (GlcNAc...) asparagine). The helical transmembrane segment at 932–952 threads the bilayer; sequence IYMLFGVIVSIIALAFQSIVI. Residues 953–990 are Cytoplasmic-facing; that stretch reads YRQRHYRASLGLPESMRAKVFPDFHHSHFDRSLKNAIQ. The chain crosses the membrane as a helical span at residues 991–1011; that stretch reads FLIDYGFYKFGLEITMIAIGI. Position 1012 (Asp1012) is a topological domain, extracellular. The chain crosses the membrane as a helical span at residues 1013–1033; the sequence is IFNRMDALAAIQCFWLVLFAL. Residues 1034–1041 are Cytoplasmic-facing; it reads NKRVFVRR. Residues 1042–1062 traverse the membrane as a helical segment; it reads IWVFYVIYMAILYPLQFFSYV. The Extracellular segment spans residues 1063–1096; it reads GLPPDSCIEYPWSYWIPSYSDDARFNLSYLLNLS. Asn1088 and Asn1094 each carry an N-linked (GlcNAc...) asparagine glycan. A helical transmembrane segment spans residues 1097 to 1117; the sequence is IYGVNWPSAYLIGDFFVLLLA. The Cytoplasmic portion of the chain corresponds to 1118-1160; that stretch reads SCQLAVFRREGEDNDSIYNDGNFVIKPENPQYDFIDTKKSYVD. The helical transmembrane segment at 1161–1181 threads the bilayer; the sequence is YFKSFVFHYGHWITLMSTLAA. Residues 1182 to 1187 are Extracellular-facing; it reads GIAGTS. A helical membrane pass occupies residues 1188–1210; sequence LFALGYIIFTLTMLWSGNNLYVM. The Cytoplasmic portion of the chain corresponds to 1211–1231; sequence NSTLRSFEHTLKRWNALLGYT. The chain crosses the membrane as a helical span at residues 1232–1252; it reads LFTITMKVCLQIFGCVFLSWF. Residues 1253–1299 lie on the Extracellular side of the membrane; it reads DQSGGWGKTLCIVRQLFSITCVNNECHVLKELEDFSKACAVETKEGN. The helical transmembrane segment at 1300–1320 threads the bilayer; the sequence is IGFDVIALSFLVFQIRIFHSW. At 1321-1615 the chain is on the cytoplasmic side; the sequence is YFQHCMVEYR…VVNCIGAHTD (295 aa). The tract at residues 1463–1502 is disordered; that stretch reads DTIKDPDSRALIAVSEPEARKPGGTEETDGDEDEDNKDSK. Residues 1488–1498 show a composition bias toward acidic residues; sequence EETDGDEDEDN. A helical transmembrane segment spans residues 1616 to 1636; that stretch reads ILCYFFAIMTQVMTGGLITLP. The Extracellular segment spans residues 1637–1654; it reads LPLMSLFWGNLSNPRPSK. Asn1646 carries an N-linked (GlcNAc...) asparagine glycan. Residues 1655 to 1675 form a helical membrane-spanning segment; the sequence is FFWVTMITYTECVIVIKFVCQ. The Cytoplasmic segment spans residues 1676–1706; that stretch reads FAFMPYNSITWRTEHQMDPMSLDKLFGVSQR. Residues 1707–1727 form a helical membrane-spanning segment; sequence DSFALWDIVLLFSLFFHRYML. Over 1728–1833 the chain is Extracellular; that stretch reads RKLGLWKDAN…KFRYIRDLYP (106 aa). Asn1737 carries N-linked (GlcNAc...) asparagine glycosylation. A helical membrane pass occupies residues 1834-1854; the sequence is IMFGIDVICFLIMTFGYSAFG. At 1855 to 1866 the chain is on the cytoplasmic side; sequence EGGSGNVLDDVK. The helical transmembrane segment at 1867–1887 threads the bilayer; sequence ASRIPVTLVVMLVGMTLAIII. The Extracellular portion of the chain corresponds to 1888–1900; that stretch reads DRALYLRKSVVGK. Residues 1901–1921 traverse the membrane as a helical segment; sequence LIYQVLMIAFLHIWVFLVLPN. Topologically, residues 1922-1930 are cytoplasmic; that stretch reads MTRRSAISN. A helical transmembrane segment spans residues 1931 to 1951; sequence HVAQALYVIKSCYFLVSAWQI. At 1952-2046 the chain is on the extracellular side; the sequence is RNGYPELCIG…KGKLVKYMMG (95 aa). Residues 2047–2067 form a helical membrane-spanning segment; it reads FPIIIGVVIFIFSPLLLWSLL. The Cytoplasmic segment spans residues 2068–2346; sequence NQIGTISMPE…VGFIDRAFPS (279 aa). Residues 2347 to 2367 form a helical membrane-spanning segment; that stretch reads FLAKVFKGGVIAVYLSVILVV. Over 2368 to 2442 the chain is Extracellular; sequence GRGLVRGIFT…WTRMSKKKQE (75 aa).

This sequence belongs to the PIEZO (TC 1.A.75) family. Expressed in the pharyngeal-intestinal and spermathecal-uterine valves and in multiple reproductive tissues including the germline, somatic oviduct, and spermatheca. During reproduction, it is expressed in sheath cells, sperm, both spermathecal valves and the spermathecal bag cells.

It localises to the cell membrane. Functionally, pore-forming subunit of a mechanosensitive non-specific cation channel. Generates currents characterized by a linear current-voltage relationship. Plays a role in reproduction by positively regulating inter-tissue signaling to promote oocyte maturation, ovulation and fertilization, and sperm navigation from and to the spermatheca. May play a role in regulating cytosolic and endoplasmic reticulum calcium ion release. The polypeptide is Piezo-type mechanosensitive ion channel component 1 (Caenorhabditis elegans).